The sequence spans 250 residues: Putative apoptosis inhibitor ORF99 (250 aa).

One copy of the BIR repeat lies at 13–78 (RVNSFGGWSK…KFSGDCLYLK (66 aa)).

Its function is as follows. May act as an apoptosis inhibitor. This is Putative apoptosis inhibitor ORF99 from Ostreid herpesvirus 1 (isolate France) (OsHV-1).